The chain runs to 151 residues: Large ribosomal subunit protein bL9 (151 aa).

It belongs to the bacterial ribosomal protein bL9 family.

Its function is as follows. Binds to the 23S rRNA. This is Large ribosomal subunit protein bL9 from Prochlorococcus marinus (strain MIT 9515).